Consider the following 281-residue polypeptide: NADPH-dependent 7-cyano-7-deazaguanine reductase (281 aa).

88 to 90 (IES) lines the substrate pocket. 90–91 (SK) provides a ligand contact to NADPH. The active-site Thioimide intermediate is cysteine 189. The active-site Proton donor is the aspartate 196. Substrate is bound at residue 228 to 229 (HE). 257–258 (RG) is a binding site for NADPH.

Belongs to the GTP cyclohydrolase I family. QueF type 2 subfamily. As to quaternary structure, homodimer.

Its subcellular location is the cytoplasm. The enzyme catalyses 7-aminomethyl-7-carbaguanine + 2 NADP(+) = 7-cyano-7-deazaguanine + 2 NADPH + 3 H(+). Its pathway is tRNA modification; tRNA-queuosine biosynthesis. Its function is as follows. Catalyzes the NADPH-dependent reduction of 7-cyano-7-deazaguanine (preQ0) to 7-aminomethyl-7-deazaguanine (preQ1). The protein is NADPH-dependent 7-cyano-7-deazaguanine reductase of Proteus mirabilis (strain HI4320).